A 673-amino-acid chain; its full sequence is Cell division cycle protein 23 homolog (673 aa).

TPR repeat units follow at residues 86-120 (AEMW…VLDN), 159-195 (NKEF…YQEH), 232-267 (EDVW…EPRI), 332-365 (PMII…DPYR), 400-433 (WETC…NPGL), 434-467 (AALW…DPAD), 469-501 (RGWY…KPHD), 502-535 (SRLL…GDVE), 539-572 (LWSL…VTSA), and 577-610 (IYAI…ETLC). The tract at residues 628–673 (SRLPVEEAPGPSNASAAGGQEAMDTEEAPQEGGEEEMSEGEDDFSF) is disordered. Residues 635 to 646 (APGPSNASAAGG) are compositionally biased toward low complexity. Residues 650–673 (MDTEEAPQEGGEEEMSEGEDDFSF) show a composition bias toward acidic residues.

The protein belongs to the APC8/CDC23 family. As to quaternary structure, the APC/C complex is probably composed of at least 12 subunits: apc-2, apc-10, apc-11, cdc-26, emb-1, emb-27, emb-30, mat-1, mat-2, mat-3, such-1 and gfi-3.

It functions in the pathway protein modification; protein ubiquitination. Its function is as follows. Probable component of the anaphase promoting complex/cyclosome (APC/C), a cell cycle-regulated E3 ubiquitin ligase that controls progression through mitosis and the G1 phase of the cell cycle. The APC/C complex acts by mediating ubiquitination and subsequent degradation of target proteins. Developmental role in early embryogenesis and the metaphase to anaphase transition in oocyte and spermatocyte meiosis and mitosis in germ cells. Required for embryonic anterior-posterior axis formation. Plays a role in regulating the abundance of glr-1 receptors in postmitotic neurons, which may in turn control animal locomotion. Involved in regulating GABA neurotransmitter release at neuromuscular junctions in GABA motor neurons. The polypeptide is Cell division cycle protein 23 homolog (Caenorhabditis elegans).